Here is a 180-residue protein sequence, read N- to C-terminus: Large ribosomal subunit protein uL6 (180 aa).

Belongs to the universal ribosomal protein uL6 family. Part of the 50S ribosomal subunit.

In terms of biological role, this protein binds to the 23S rRNA, and is important in its secondary structure. It is located near the subunit interface in the base of the L7/L12 stalk, and near the tRNA binding site of the peptidyltransferase center. This Borrelia duttonii (strain Ly) protein is Large ribosomal subunit protein uL6.